The sequence spans 192 residues: Crossover junction endodeoxyribonuclease RuvC (192 aa).

Residues aspartate 7, glutamate 67, and aspartate 140 contribute to the active site. Residues aspartate 7, glutamate 67, and aspartate 140 each contribute to the Mg(2+) site. The interval 158-192 (RQSGVPPRTNSRRKSGTGGSWEQFVRQSPNVVVRS) is disordered. The segment covering 182 to 192 (VRQSPNVVVRS) has biased composition (polar residues).

Belongs to the RuvC family. As to quaternary structure, homodimer which binds Holliday junction (HJ) DNA. The HJ becomes 2-fold symmetrical on binding to RuvC with unstacked arms; it has a different conformation from HJ DNA in complex with RuvA. In the full resolvosome a probable DNA-RuvA(4)-RuvB(12)-RuvC(2) complex forms which resolves the HJ. It depends on Mg(2+) as a cofactor.

It is found in the cytoplasm. The catalysed reaction is Endonucleolytic cleavage at a junction such as a reciprocal single-stranded crossover between two homologous DNA duplexes (Holliday junction).. In terms of biological role, the RuvA-RuvB-RuvC complex processes Holliday junction (HJ) DNA during genetic recombination and DNA repair. Endonuclease that resolves HJ intermediates. Cleaves cruciform DNA by making single-stranded nicks across the HJ at symmetrical positions within the homologous arms, yielding a 5'-phosphate and a 3'-hydroxyl group; requires a central core of homology in the junction. The consensus cleavage sequence is 5'-(A/T)TT(C/G)-3'. Cleavage occurs on the 3'-side of the TT dinucleotide at the point of strand exchange. HJ branch migration catalyzed by RuvA-RuvB allows RuvC to scan DNA until it finds its consensus sequence, where it cleaves and resolves the cruciform DNA. The sequence is that of Crossover junction endodeoxyribonuclease RuvC from Chlorobium chlorochromatii (strain CaD3).